Here is a 58-residue protein sequence, read N- to C-terminus: Large ribosomal subunit protein bL32 (58 aa).

It belongs to the bacterial ribosomal protein bL32 family.

The chain is Large ribosomal subunit protein bL32 from Anaplasma marginale (strain Florida).